Reading from the N-terminus, the 82-residue chain is Small ribosomal subunit protein uS17 (82 aa).

It belongs to the universal ribosomal protein uS17 family. In terms of assembly, part of the 30S ribosomal subunit.

In terms of biological role, one of the primary rRNA binding proteins, it binds specifically to the 5'-end of 16S ribosomal RNA. The sequence is that of Small ribosomal subunit protein uS17 from Phenylobacterium zucineum (strain HLK1).